Reading from the N-terminus, the 94-residue chain is Pyrimidine/purine nucleoside phosphorylase (94 aa).

Belongs to the nucleoside phosphorylase PpnP family.

The catalysed reaction is a purine D-ribonucleoside + phosphate = a purine nucleobase + alpha-D-ribose 1-phosphate. The enzyme catalyses adenosine + phosphate = alpha-D-ribose 1-phosphate + adenine. It carries out the reaction cytidine + phosphate = cytosine + alpha-D-ribose 1-phosphate. It catalyses the reaction guanosine + phosphate = alpha-D-ribose 1-phosphate + guanine. The catalysed reaction is inosine + phosphate = alpha-D-ribose 1-phosphate + hypoxanthine. The enzyme catalyses thymidine + phosphate = 2-deoxy-alpha-D-ribose 1-phosphate + thymine. It carries out the reaction uridine + phosphate = alpha-D-ribose 1-phosphate + uracil. It catalyses the reaction xanthosine + phosphate = alpha-D-ribose 1-phosphate + xanthine. Functionally, catalyzes the phosphorolysis of diverse nucleosides, yielding D-ribose 1-phosphate and the respective free bases. Can use uridine, adenosine, guanosine, cytidine, thymidine, inosine and xanthosine as substrates. Also catalyzes the reverse reactions. This chain is Pyrimidine/purine nucleoside phosphorylase, found in Vibrio campbellii (strain ATCC BAA-1116).